The primary structure comprises 148 residues: uncharacterized protein (148 aa).

The segment at 122–148 (HNWRKRMGTRRGRHEQSPTSRPRKGPD) is disordered. Over residues 123–134 (NWRKRMGTRRGR) the composition is skewed to basic residues.

This is an uncharacterized protein from Homo sapiens (Human).